The following is a 575-amino-acid chain: NEDD4-binding protein 2-like 2 (575 aa).

Basic and acidic residues-rich tracts occupy residues 69-87 (QEDKTSTDVLKPLHKEMPG), 129-142 (PPEKKKCRERKSET), and 149-167 (DSKRRQEEKQKSNSKKLEM). Disordered stretches follow at residues 69–169 (QEDK…EMDT) and 555–575 (GEQRWGGSLGSHSQVSIADDY). Positions 162 to 194 (SKKLEMDTELSQFYKEIEELENENEASQGSCTE) form a coiled coil. A compositionally biased stretch (polar residues) spans 564-575 (GSHSQVSIADDY).

The polypeptide is NEDD4-binding protein 2-like 2 (N4bp2l2) (Mus musculus (Mouse)).